The primary structure comprises 957 residues: Retinoblastoma-related protein 1 (957 aa).

The interval 369–569 (TPVSTAMTTA…EKGSSMYNSL (201 aa)) is domain A. The pocket stretch occupies residues 369–808 (TPVSTAMTTA…NEVFIPTVKP (440 aa)). The tract at residues 570 to 677 (IVARPTLSAE…PAAGGETCAE (108 aa)) is spacer. The segment at 678-808 (TGIGVFLSKI…NEVFIPTVKP (131 aa)) is domain B. A disordered region spans residues 814–854 (GPGTSPNRNNEPKSGGDAASFPESPRLSRFPNLPDMSPKKV).

This sequence belongs to the retinoblastoma protein (RB) family.

Its subcellular location is the nucleus. Functionally, regulator of biological processes that recruits a histone deacetylase to control gene transcription. May play a role in the entry into mitosis, negatively regulating the cell proliferation. Formation of stable complexes with geminiviridae replication-associated proteins may create a cellular environment which favors viral DNA replication. The protein is Retinoblastoma-related protein 1 (RBR1) of Triticum aestivum (Wheat).